The chain runs to 168 residues: 2-C-methyl-D-erythritol 2,4-cyclodiphosphate synthase (168 aa).

A divalent metal cation is bound by residues Asp-13 and His-15. 4-CDP-2-C-methyl-D-erythritol 2-phosphate is bound by residues 13–15 and 39–40; these read DVH and HS. His-47 provides a ligand contact to a divalent metal cation. Residues 61–63, 66–70, Phe-144, and Lys-147 contribute to the 4-CDP-2-C-methyl-D-erythritol 2-phosphate site; these read DIG and FPDTD.

This sequence belongs to the IspF family. As to quaternary structure, homotrimer. A divalent metal cation serves as cofactor.

The catalysed reaction is 4-CDP-2-C-methyl-D-erythritol 2-phosphate = 2-C-methyl-D-erythritol 2,4-cyclic diphosphate + CMP. Its pathway is isoprenoid biosynthesis; isopentenyl diphosphate biosynthesis via DXP pathway; isopentenyl diphosphate from 1-deoxy-D-xylulose 5-phosphate: step 4/6. In terms of biological role, involved in the biosynthesis of isopentenyl diphosphate (IPP) and dimethylallyl diphosphate (DMAPP), two major building blocks of isoprenoid compounds. Catalyzes the conversion of 4-diphosphocytidyl-2-C-methyl-D-erythritol 2-phosphate (CDP-ME2P) to 2-C-methyl-D-erythritol 2,4-cyclodiphosphate (ME-CPP) with a corresponding release of cytidine 5-monophosphate (CMP). In Ralstonia pickettii (strain 12J), this protein is 2-C-methyl-D-erythritol 2,4-cyclodiphosphate synthase.